Reading from the N-terminus, the 175-residue chain is Peptide deformylase (175 aa).

The Fe cation site is built by Cys96 and His138. Residue Glu139 is part of the active site. His142 is a Fe cation binding site.

Belongs to the polypeptide deformylase family. Fe(2+) serves as cofactor.

It carries out the reaction N-terminal N-formyl-L-methionyl-[peptide] + H2O = N-terminal L-methionyl-[peptide] + formate. In terms of biological role, removes the formyl group from the N-terminal Met of newly synthesized proteins. Requires at least a dipeptide for an efficient rate of reaction. N-terminal L-methionine is a prerequisite for activity but the enzyme has broad specificity at other positions. The polypeptide is Peptide deformylase (Helicobacter pylori (strain Shi470)).